The sequence spans 303 residues: ATP synthase gamma chain (303 aa).

This sequence belongs to the ATPase gamma chain family. As to quaternary structure, F-type ATPases have 2 components, CF(1) - the catalytic core - and CF(0) - the membrane proton channel. CF(1) has five subunits: alpha(3), beta(3), gamma(1), delta(1), epsilon(1). CF(0) has three main subunits: a, b and c.

It localises to the cell membrane. Its function is as follows. Produces ATP from ADP in the presence of a proton gradient across the membrane. The gamma chain is believed to be important in regulating ATPase activity and the flow of protons through the CF(0) complex. The protein is ATP synthase gamma chain of Nocardioides sp. (strain ATCC BAA-499 / JS614).